Here is a 215-residue protein sequence, read N- to C-terminus: Small ribosomal subunit protein uS7 (215 aa).

It belongs to the universal ribosomal protein uS7 family. In terms of assembly, part of the 30S ribosomal subunit.

Its function is as follows. One of the primary rRNA binding proteins, it binds directly to 16S rRNA where it nucleates assembly of the head domain of the 30S subunit. Is located at the subunit interface close to the decoding center. This is Small ribosomal subunit protein uS7 from Thermococcus gammatolerans (strain DSM 15229 / JCM 11827 / EJ3).